A 509-amino-acid chain; its full sequence is Probable malate:quinone oxidoreductase (509 aa).

Residues Leu-490 to Ser-509 form a disordered region. Positions Asn-493 to Ser-509 are enriched in basic and acidic residues.

Belongs to the MQO family. The cofactor is FAD.

The catalysed reaction is (S)-malate + a quinone = a quinol + oxaloacetate. The protein operates within carbohydrate metabolism; tricarboxylic acid cycle; oxaloacetate from (S)-malate (quinone route): step 1/1. This chain is Probable malate:quinone oxidoreductase, found in Geobacillus sp. (strain WCH70).